Here is a 359-residue protein sequence, read N- to C-terminus: Phosphate acyltransferase (359 aa).

Belongs to the PlsX family. In terms of assembly, homodimer. Probably interacts with PlsY.

It localises to the cytoplasm. It carries out the reaction a fatty acyl-[ACP] + phosphate = an acyl phosphate + holo-[ACP]. It participates in lipid metabolism; phospholipid metabolism. In terms of biological role, catalyzes the reversible formation of acyl-phosphate (acyl-PO(4)) from acyl-[acyl-carrier-protein] (acyl-ACP). This enzyme utilizes acyl-ACP as fatty acyl donor, but not acyl-CoA. The polypeptide is Phosphate acyltransferase (Salmonella agona (strain SL483)).